The following is a 362-amino-acid chain: 3-dehydroquinate synthase (362 aa).

NAD(+) is bound by residues 74–79, 108–112, 132–133, lysine 145, lysine 154, and 172–175; these read DGEGYK, GVIGD, TT, and TLDT. Zn(2+) contacts are provided by glutamate 187, histidine 250, and histidine 267.

This sequence belongs to the sugar phosphate cyclases superfamily. Dehydroquinate synthase family. Requires Co(2+) as cofactor. Zn(2+) is required as a cofactor. It depends on NAD(+) as a cofactor.

The protein localises to the cytoplasm. It catalyses the reaction 7-phospho-2-dehydro-3-deoxy-D-arabino-heptonate = 3-dehydroquinate + phosphate. The protein operates within metabolic intermediate biosynthesis; chorismate biosynthesis; chorismate from D-erythrose 4-phosphate and phosphoenolpyruvate: step 2/7. Its function is as follows. Catalyzes the conversion of 3-deoxy-D-arabino-heptulosonate 7-phosphate (DAHP) to dehydroquinate (DHQ). In Citrifermentans bemidjiense (strain ATCC BAA-1014 / DSM 16622 / JCM 12645 / Bem) (Geobacter bemidjiensis), this protein is 3-dehydroquinate synthase.